The sequence spans 545 residues: 4-coumarate--CoA ligase 1 (545 aa).

ATP-binding residues include Ser192, Ser193, Gly194, Thr195, Thr196, and Lys200. (E)-4-coumaroyl-AMP-binding residues include Tyr242 and Ser246. Lys263 is a binding site for CoA. Positions 265-334 (DIAQFLELIP…AKFPNAKLGQ (70 aa)) are SBD1. Residues Ala312, Gln334, Gly335, Thr339, and Met347 each contribute to the (E)-4-coumaroyl-AMP site. 3 residues coordinate ATP: Gln334, Gly335, and Thr339. Residues 335 to 402 (GYGMTEAGPV…IRGDQIMKGY (68 aa)) form an SBD2 region. 2 residues coordinate ATP: Asp423 and Arg438. The (E)-4-coumaroyl-AMP site is built by Lys440 and Lys444. Lys446 and Gly447 together coordinate CoA. Lys529 is an ATP binding site.

This sequence belongs to the ATP-dependent AMP-binding enzyme family. Mg(2+) serves as cofactor.

The catalysed reaction is (E)-4-coumarate + ATP + CoA = (E)-4-coumaroyl-CoA + AMP + diphosphate. It catalyses the reaction (E)-4-coumarate + ATP + H(+) = (E)-4-coumaroyl-AMP + diphosphate. The enzyme catalyses (E)-4-coumaroyl-AMP + CoA = (E)-4-coumaroyl-CoA + AMP + H(+). The protein operates within phytoalexin biosynthesis; 3,4',5-trihydroxystilbene biosynthesis; 3,4',5-trihydroxystilbene from trans-4-coumarate: step 1/2. Functionally, carboxylate--CoA ligase that may use 4-coumarate as substrate. Follows a two-step reaction mechanism, wherein the carboxylate substrate first undergoes adenylation by ATP, followed by a thioesterification in the presence of CoA to yield the final CoA thioester. This is 4-coumarate--CoA ligase 1 (4CL1) from Solanum tuberosum (Potato).